A 307-amino-acid polypeptide reads, in one-letter code: MSQLSVKHLLGIKDLTTKDIELILETAGQFKEVINRPIKKVPSLRDVTIANVFFENSTRTRLSFELAQKRLSADTINFSAAASSVKKGETLLDTVNNILAMKVDMIVMRHASVGAPHFLAKHISANIVNAGDGTHEHPTQALLDSFSIKEKLGGVAGKKVCIFGDILHSRVALSNIFALQKQGAEVMVCGPSTLIPKFIGELGVKVEFDLRKALQWCDVANVLRIQLERQTIKYFPTLREYAQYYGINKQLLDSLNKEIVIMHPGPINRGVELSSDVADSGHSIILDQVENGVAVRMAVLYLLAGNK.

Carbamoyl phosphate is bound by residues Arg-59 and Thr-60. Lys-87 serves as a coordination point for L-aspartate. Carbamoyl phosphate is bound by residues Arg-109, His-137, and Gln-140. Arg-170 and Arg-224 together coordinate L-aspartate. Gly-265 and Pro-266 together coordinate carbamoyl phosphate.

The protein belongs to the aspartate/ornithine carbamoyltransferase superfamily. ATCase family. In terms of assembly, heterododecamer (2C3:3R2) of six catalytic PyrB chains organized as two trimers (C3), and six regulatory PyrI chains organized as three dimers (R2).

It catalyses the reaction carbamoyl phosphate + L-aspartate = N-carbamoyl-L-aspartate + phosphate + H(+). Its pathway is pyrimidine metabolism; UMP biosynthesis via de novo pathway; (S)-dihydroorotate from bicarbonate: step 2/3. Functionally, catalyzes the condensation of carbamoyl phosphate and aspartate to form carbamoyl aspartate and inorganic phosphate, the committed step in the de novo pyrimidine nucleotide biosynthesis pathway. This chain is Aspartate carbamoyltransferase catalytic subunit, found in Cytophaga hutchinsonii (strain ATCC 33406 / DSM 1761 / CIP 103989 / NBRC 15051 / NCIMB 9469 / D465).